A 691-amino-acid polypeptide reads, in one-letter code: Beta-galactosidase III (691 aa).

Positions 121 and 159 each coordinate substrate. The active-site Proton donor is the E160. Residue E318 is the Nucleophile of the active site. Substrate-binding positions include W326 and 366-369 (EKWH).

This sequence belongs to the glycosyl hydrolase 42 family.

The enzyme catalyses Hydrolysis of terminal non-reducing beta-D-galactose residues in beta-D-galactosides.. Specific for beta-D-anomer-linked galactoside substrates. Hydrolyzes o-nitrophenyl-beta-D-galactopyranoside (ONPG), chromogen 5-bromo-4-chloro-3-indolyl-beta-D-galactopyranoside (X-gal) and to a lesser extent lactose. Hydrolyzes p-nitrophenyl-beta-D-galacturonide very slightly. Does not hydrolyze maltose, sucrose, raffinose or melibiose. Has some transgalactosylation activity yielding galacto-oligosaccharides (GaOS), including O-beta-D-galactopyranosyl-(1,3)-O-beta-D-galactopyranosyl-(1-4)-D-glucopyranose. The protein is Beta-galactosidase III of Bifidobacterium longum subsp. infantis.